The primary structure comprises 367 residues: Cyclin-D5-1 (367 aa).

Residues 307-333 are disordered; it reads QPTSPASKSTTTTTGKRSSSSSCSEST.

Belongs to the cyclin family. Cyclin D subfamily.

This Oryza sativa subsp. japonica (Rice) protein is Cyclin-D5-1 (CYCD5-1).